Here is a 604-residue protein sequence, read N- to C-terminus: MKSTIITSILFSVATVQAYSPAEQIDVQSHLLSDPTKVEGKTYDYVIAGGGLTGLTVASKLSENPKIKVLVIEKGFYESNDGPIIEDPNAYGEIFGTSVDQNYLTVPLINNRTGEIKSGLGLGGSTLINGDSWTRPDKVQIDSWEKVFGMEGWNWDNVFQYMQKAERSRPPTAAQIEAGHFYDPACHGTDGTVHAGPRDNGKPWSPLMRALMNTVSAFGVPVQKDFHCGHPRGVSMIPNNLHENQIRADAAREWLLPNYQRDNLQILTGQKVGKVLFNQTASGPKAVGVNFGTNKAVNFNVYAKQEVLLAAGSAISPLILEYSGIGIKSVLDKAGVKQLLELPVGLNMQDQTTTTVRSRANNAPGQGQAAYFANFTEVLGDHAAQGINLLDTKLDQWAEETVARGGFHNVTALKIQYENYRNWLLDEDVAFAELFFDTEGKINFDIWNLIPFTRGSVHILSSDPYLWQYANDPKFFMNELDLLGQAAATKLGRELSSAGEMKKYYAGETIPGDNLPQDATVEQWEDYVMMNFRPNWHAVSTCSMMSRELGGVVDATAKVYGTQGLRVIDGSIPPTQVSSHVMTVFYGMALRIAESVLEDYAKSA.

Positions 1–18 (MKSTIITSILFSVATVQA) are cleaved as a signal peptide. Positions 52, 53, and 73 each coordinate FAD. N111 is a glycosylation site (N-linked (GlcNAc...) asparagine). Residues S125, N129, G130, and S132 each contribute to the FAD site. C186 and C228 are joined by a disulfide. N-linked (GlcNAc...) asparagine glycosylation occurs at N213. V272 contacts FAD. N-linked (GlcNAc...) asparagine glycans are attached at residues N278, N409, and N531. Catalysis depends on H537, which acts as the Proton acceptor. Residues K558 and V559 each contribute to the O2 site. FAD is bound by residues G570 and M582.

It belongs to the GMC oxidoreductase family. Homodimer. FAD serves as cofactor.

The protein resides in the secreted. It is found in the cell wall. It localises to the cytoplasm. The protein localises to the extracellular space. Its subcellular location is the extracellular matrix. The catalysed reaction is beta-D-glucose + O2 = D-glucono-1,5-lactone + H2O2. Functionally, glucose oxidase catalyzes the oxidation of beta-D-glucose to D-glucono-delta-lactone and hydrogen peroxide in the presence of molecular oxygen. The enzyme also catalyzes the reaction with D-xylose but at a much lower rate. Shows any activities against D-fructose, D-galactose and D-arabinose. The enzyme is cytotoxic for a series of bacteria, yeasts and filamentous fungi and acts primarily via the liberation of H(2)O(2), which is a harmful oxidative stress-generating agent. The protein is Glucose oxidase of Penicillium chrysogenum (Penicillium notatum).